A 122-amino-acid polypeptide reads, in one-letter code: LYR motif-containing protein 1 (122 aa).

The protein belongs to the complex I LYR family.

May promote cell proliferation and inhibition of apoptosis of preadipocytes. The sequence is that of LYR motif-containing protein 1 (Lyrm1) from Rattus norvegicus (Rat).